A 218-amino-acid polypeptide reads, in one-letter code: uncharacterized protein (218 aa).

The region spanning I2–K216 is the ABC transporter domain. G34–T41 contacts ATP.

The protein belongs to the ABC transporter superfamily.

This is an uncharacterized protein from Bacillus subtilis (strain 168).